We begin with the raw amino-acid sequence, 91 residues long: Putative transmembrane protein encoded by LINC00862 (91 aa).

A helical transmembrane segment spans residues 49–69; the sequence is IMALILMPSLHCFGNILILLF.

Its subcellular location is the membrane. The polypeptide is Putative transmembrane protein encoded by LINC00862 (LINC00862) (Homo sapiens (Human)).